The chain runs to 379 residues: Lipid-A-disaccharide synthase (379 aa).

This sequence belongs to the LpxB family.

The enzyme catalyses a lipid X + a UDP-2-N,3-O-bis[(3R)-3-hydroxyacyl]-alpha-D-glucosamine = a lipid A disaccharide + UDP + H(+). The protein operates within bacterial outer membrane biogenesis; LPS lipid A biosynthesis. Functionally, condensation of UDP-2,3-diacylglucosamine and 2,3-diacylglucosamine-1-phosphate to form lipid A disaccharide, a precursor of lipid A, a phosphorylated glycolipid that anchors the lipopolysaccharide to the outer membrane of the cell. The sequence is that of Lipid-A-disaccharide synthase from Vibrio cholerae serotype O1 (strain ATCC 39541 / Classical Ogawa 395 / O395).